We begin with the raw amino-acid sequence, 114 residues long: MSRALICSLALLAMLVISGTYASPAANAEALAAANAEASAAANAEPLAAANAEPLAAANAEPLAAANADPIAAANAEPSAAANAEPLAAANAEPSAGPSPLAAAQDPPVVKMKG.

The N-terminal stretch at 1-22 is a signal peptide; sequence MSRALICSLALLAMLVISGTYA. 9 repeat units span residues 22 to 29, 30 to 37, 38 to 45, 46 to 53, 54 to 61, 62 to 69, 70 to 77, 78 to 85, and 86 to 93. A 9 X 8 AA approximate tandem repeats of [AP]-[ILS]-[AP]-A-A-N-A-[DE] region spans residues 22 to 93; that stretch reads ASPAANAEAL…AEPLAAANAE (72 aa). The propeptide occupies 23-104; sequence SPAANAEALA…SAGPSPLAAA (82 aa). Over residues 82–96 the composition is skewed to low complexity; it reads ANAEPLAAANAEPSA. The interval 82–114 is disordered; that stretch reads ANAEPLAAANAEPSAGPSPLAAAQDPPVVKMKG. At Gln-105 the chain carries Pyrrolidone carboxylic acid. A Lysine amide modification is found at Lys-113.

As to expression, expressed by the venom gland.

The protein resides in the secreted. The sequence is that of As-peptide 126 from Anoplius samariensis (Solitary wasp).